Reading from the N-terminus, the 152-residue chain is Cell division protein SepF (152 aa).

A compositionally biased stretch (basic and acidic residues) spans 23-32 (EVAREPEPMQ). The tract at residues 23–42 (EVAREPEPMQKKTKKEKPSK) is disordered.

The protein belongs to the SepF family. In terms of assembly, homodimer. Interacts with FtsZ.

The protein resides in the cytoplasm. Its function is as follows. Cell division protein that is part of the divisome complex and is recruited early to the Z-ring. Probably stimulates Z-ring formation, perhaps through the cross-linking of FtsZ protofilaments. Its function overlaps with FtsA. This chain is Cell division protein SepF, found in Listeria innocua serovar 6a (strain ATCC BAA-680 / CLIP 11262).